The primary structure comprises 336 residues: tRNA pseudouridine synthase D (336 aa).

D84 (nucleophile) is an active-site residue. A TRUD domain is found at 164–298 (GVPNYFGEQR…TPSYRWLVGD (135 aa)).

Belongs to the pseudouridine synthase TruD family.

It catalyses the reaction uridine(13) in tRNA = pseudouridine(13) in tRNA. Its function is as follows. Responsible for synthesis of pseudouridine from uracil-13 in transfer RNAs. This chain is tRNA pseudouridine synthase D, found in Cellvibrio japonicus (strain Ueda107) (Pseudomonas fluorescens subsp. cellulosa).